The chain runs to 199 residues: Chaperone protein TorD (199 aa).

This sequence belongs to the TorD/DmsD family. TorD subfamily.

It is found in the cytoplasm. Its function is as follows. Involved in the biogenesis of TorA. Acts on TorA before the insertion of the molybdenum cofactor and, as a result, probably favors a conformation of the apoenzyme that is competent for acquiring the cofactor. The protein is Chaperone protein TorD of Shigella boydii serotype 18 (strain CDC 3083-94 / BS512).